A 90-amino-acid chain; its full sequence is Chromosomal protein MC1c (90 aa).

Functionally, protects DNA against thermal denaturation and modulates transcription. This is Chromosomal protein MC1c from Methanothrix soehngenii (Methanosaeta concilii).